The chain runs to 131 residues: Holo-[acyl-carrier-protein] synthase (131 aa).

Mg(2+) contacts are provided by aspartate 8 and glutamate 63.

The protein belongs to the P-Pant transferase superfamily. AcpS family. It depends on Mg(2+) as a cofactor.

Its subcellular location is the cytoplasm. It carries out the reaction apo-[ACP] + CoA = holo-[ACP] + adenosine 3',5'-bisphosphate + H(+). Functionally, transfers the 4'-phosphopantetheine moiety from coenzyme A to a Ser of acyl-carrier-protein. This is Holo-[acyl-carrier-protein] synthase from Shewanella pealeana (strain ATCC 700345 / ANG-SQ1).